The primary structure comprises 343 residues: Flap endonuclease 1 (343 aa).

The tract at residues 1 to 98 is N-domain; the sequence is MGVPIGDLVP…KELEKRREAR (98 aa). 7 residues coordinate Mg(2+): aspartate 27, aspartate 80, glutamate 152, glutamate 154, aspartate 173, aspartate 175, and aspartate 236. The tract at residues 116 to 258 is I-domain; that stretch reads EARKYAQRAT…KALEIVRYSR (143 aa). The tract at residues 330 to 338 is interaction with PCNA; the sequence is RQSTLESWF.

Belongs to the XPG/RAD2 endonuclease family. FEN1 subfamily. Interacts with PCNA. PCNA stimulates the nuclease activity without altering cleavage specificity. Requires Mg(2+) as cofactor.

Structure-specific nuclease with 5'-flap endonuclease and 5'-3' exonuclease activities involved in DNA replication and repair. During DNA replication, cleaves the 5'-overhanging flap structure that is generated by displacement synthesis when DNA polymerase encounters the 5'-end of a downstream Okazaki fragment. Binds the unpaired 3'-DNA end and kinks the DNA to facilitate 5' cleavage specificity. Cleaves one nucleotide into the double-stranded DNA from the junction in flap DNA, leaving a nick for ligation. Also involved in the base excision repair (BER) pathway. Acts as a genome stabilization factor that prevents flaps from equilibrating into structures that lead to duplications and deletions. Also possesses 5'-3' exonuclease activity on nicked or gapped double-stranded DNA. The chain is Flap endonuclease 1 from Pyrococcus horikoshii (strain ATCC 700860 / DSM 12428 / JCM 9974 / NBRC 100139 / OT-3).